We begin with the raw amino-acid sequence, 118 residues long: Large ribosomal subunit protein bL19 (118 aa).

The protein belongs to the bacterial ribosomal protein bL19 family.

This protein is located at the 30S-50S ribosomal subunit interface and may play a role in the structure and function of the aminoacyl-tRNA binding site. The chain is Large ribosomal subunit protein bL19 from Campylobacter jejuni subsp. jejuni serotype O:6 (strain 81116 / NCTC 11828).